Here is a 103-residue protein sequence, read N- to C-terminus: Small ribosomal subunit protein uS10 (103 aa).

It belongs to the universal ribosomal protein uS10 family. In terms of assembly, part of the 30S ribosomal subunit.

Involved in the binding of tRNA to the ribosomes. The chain is Small ribosomal subunit protein uS10 from Buchnera aphidicola subsp. Acyrthosiphon pisum (strain 5A).